We begin with the raw amino-acid sequence, 317 residues long: Enoyl-CoA delta isomerase 3, peroxisomal (317 aa).

An ACB domain is found at 1–46 (MPKPGVFNFVNKATWDARNALGSLPKETARKNYVDLVSSLSSSSEA). The disordered stretch occupies residues 40–60 (LSSSSEAPSQGKRGADEKARE). Substrate is bound at residue 120 to 124 (SGNDL). Positions 315–317 (AKL) match the Microbody targeting signal motif.

It belongs to the enoyl-CoA hydratase/isomerase family. In terms of tissue distribution, expressed at high levels in the kidney. Also detected at very low levels in the duodenum, jejunum, ileum, heart, liver, lung, and brown adipose tissue (at protein level). In the kidney, expression seems to be localized mainly to the proximal tubule.

The protein localises to the peroxisome. It carries out the reaction a (3Z)-enoyl-CoA = a 4-saturated (2E)-enoyl-CoA. The enzyme catalyses a (3E)-enoyl-CoA = a 4-saturated (2E)-enoyl-CoA. It catalyses the reaction (3E)-nonenoyl-CoA = (2E)-nonenoyl-CoA. Functionally, catalyzes the isomerization of trans-3-nonenoyl-CoA into trans-2-nonenoyl-CoA. May also have activity towards other enoyl-CoA species. The protein is Enoyl-CoA delta isomerase 3, peroxisomal of Mus musculus (Mouse).